A 273-amino-acid chain; its full sequence is Small ribosomal subunit protein eS1 (273 aa).

This sequence belongs to the eukaryotic ribosomal protein eS1 family. Component of the small ribosomal subunit. Mature ribosomes consist of a small (40S) and a large (60S) subunit. The 40S subunit contains about 33 different proteins and 1 molecule of RNA (18S). The 60S subunit contains about 49 different proteins and 3 molecules of RNA (25S, 5.8S and 5S).

Its subcellular location is the cytoplasm. In Dictyostelium discoideum (Social amoeba), this protein is Small ribosomal subunit protein eS1 (rps3a).